The sequence spans 192 residues: Phosphoheptose isomerase (192 aa).

The 159-residue stretch at 34–192 folds into the SIS domain; it reads VVDAYRAGNK…VERELFLKGN (159 aa). 49 to 51 contributes to the substrate binding site; the sequence is NGG. The Zn(2+) site is built by His58 and Glu62. Substrate-binding positions include Glu62, 91 to 92, 117 to 119, Ser122, and Gln169; these read ND and STS. Zn(2+) contacts are provided by Gln169 and His177.

This sequence belongs to the SIS family. GmhA subfamily. In terms of assembly, homotetramer. Zn(2+) is required as a cofactor.

It is found in the cytoplasm. It catalyses the reaction 2 D-sedoheptulose 7-phosphate = D-glycero-alpha-D-manno-heptose 7-phosphate + D-glycero-beta-D-manno-heptose 7-phosphate. Its pathway is carbohydrate biosynthesis; D-glycero-D-manno-heptose 7-phosphate biosynthesis; D-glycero-alpha-D-manno-heptose 7-phosphate and D-glycero-beta-D-manno-heptose 7-phosphate from sedoheptulose 7-phosphate: step 1/1. In terms of biological role, catalyzes the isomerization of sedoheptulose 7-phosphate in D-glycero-D-manno-heptose 7-phosphate. The chain is Phosphoheptose isomerase from Geobacter sp. (strain M21).